The sequence spans 376 residues: Chaperone protein DnaJ (376 aa).

One can recognise a J domain in the interval 4-68 (DYYQLLGVAR…ETRARYDQFG (65 aa)). The CR-type zinc-finger motif lies at 135 to 217 (GGEKEIRVTH…CGGAGRLRRP (83 aa)). The Zn(2+) site is built by Cys-148, Cys-151, Cys-165, Cys-168, Cys-191, Cys-194, Cys-205, and Cys-208. CXXCXGXG motif repeat units follow at residues 148 to 155 (CGTCQGSG), 165 to 172 (CTTCGGAG), 191 to 198 (CPTCEGSG), and 205 to 212 (CDDCGGAG).

It belongs to the DnaJ family. As to quaternary structure, homodimer. Requires Zn(2+) as cofactor.

Its subcellular location is the cytoplasm. In terms of biological role, participates actively in the response to hyperosmotic and heat shock by preventing the aggregation of stress-denatured proteins and by disaggregating proteins, also in an autonomous, DnaK-independent fashion. Unfolded proteins bind initially to DnaJ; upon interaction with the DnaJ-bound protein, DnaK hydrolyzes its bound ATP, resulting in the formation of a stable complex. GrpE releases ADP from DnaK; ATP binding to DnaK triggers the release of the substrate protein, thus completing the reaction cycle. Several rounds of ATP-dependent interactions between DnaJ, DnaK and GrpE are required for fully efficient folding. Also involved, together with DnaK and GrpE, in the DNA replication of plasmids through activation of initiation proteins. The sequence is that of Chaperone protein DnaJ from Synechococcus sp. (strain ATCC 27144 / PCC 6301 / SAUG 1402/1) (Anacystis nidulans).